The following is a 296-amino-acid chain: 2-haloacid dehalogenase, configuration-inverting (296 aa).

This sequence belongs to the HAD-like hydrolase superfamily. S-2-haloalkanoic acid dehalogenase family.

It catalyses the reaction an (S)-2-haloacid + H2O = a (2R)-2-hydroxycarboxylate + a halide anion + H(+). The enzyme catalyses an (R)-2-haloacid + H2O = a (2S)-2-hydroxycarboxylate + a halide anion + H(+). Functionally, dehalogenates both (S)- and (R)-2-haloalkanoic acids to the corresponding (R)- and (S)-hydroxyalkanoic acids, respectively, with inversion of configuration at C-2. Acts on 2-haloalkanoic acids whose carbon chain lengths are five or less. The chain is 2-haloacid dehalogenase, configuration-inverting (dhlC) from Alcaligenes xylosoxydans xylosoxydans (Achromobacter xylosoxidans).